Reading from the N-terminus, the 151-residue chain is Small ribosomal subunit protein uS15 (151 aa).

Over residues 1-16 (MPHRSRHKKGRSRSVR) the composition is skewed to basic residues. The tract at residues 1–21 (MPHRSRHKKGRSRSVRPAHPT) is disordered.

It belongs to the universal ribosomal protein uS15 family. In terms of assembly, part of the 30S ribosomal subunit.

This chain is Small ribosomal subunit protein uS15, found in Pyrobaculum islandicum (strain DSM 4184 / JCM 9189 / GEO3).